Reading from the N-terminus, the 154-residue chain is Transcriptional repressor NrdR (154 aa).

A zinc finger spans residues 3-34; that stretch reads CPYCQSEDTQVKDSRPAEDGAAIRRRRACPVC. One can recognise an ATP-cone domain in the interval 49–139; sequence LVVVKRTGRK…VYRNFREAKD (91 aa).

Belongs to the NrdR family. The cofactor is Zn(2+).

In terms of biological role, negatively regulates transcription of bacterial ribonucleotide reductase nrd genes and operons by binding to NrdR-boxes. In Chelativorans sp. (strain BNC1), this protein is Transcriptional repressor NrdR.